An 80-amino-acid polypeptide reads, in one-letter code: Exodeoxyribonuclease 7 small subunit (80 aa).

The protein belongs to the XseB family. As to quaternary structure, heterooligomer composed of large and small subunits.

It localises to the cytoplasm. It catalyses the reaction Exonucleolytic cleavage in either 5'- to 3'- or 3'- to 5'-direction to yield nucleoside 5'-phosphates.. In terms of biological role, bidirectionally degrades single-stranded DNA into large acid-insoluble oligonucleotides, which are then degraded further into small acid-soluble oligonucleotides. The chain is Exodeoxyribonuclease 7 small subunit from Pseudomonas fluorescens (strain SBW25).